Consider the following 328-residue polypeptide: NADH-cytochrome b5 reductase-like protein (328 aa).

The FAD-binding FR-type domain occupies 76–184; it reads DKWLEFKLQD…KGPVEKFKYS (109 aa). Thr201 is subject to Phosphothreonine.

It belongs to the flavoprotein pyridine nucleotide cytochrome reductase family. The cofactor is FAD.

The protein localises to the mitochondrion. The enzyme catalyses 2 Fe(III)-[cytochrome b5] + NADH = 2 Fe(II)-[cytochrome b5] + NAD(+) + H(+). In terms of biological role, desaturation and elongation of fatty acids. This chain is NADH-cytochrome b5 reductase-like protein (CBR2), found in Arabidopsis thaliana (Mouse-ear cress).